The following is a 254-amino-acid chain: MAIANKNIIFVAGLGGIGLDTSREIVKSGPKNLVILDRIDNPTAIAELKAINPKVTVTFYPYDVTVPVAETTKLLKTIFAQLKTVDLLINGAGILDDHQIERTIAVNFTGTVNTTTAIMEFWDKRKGGPGGVIANICSVTGFNAIYQVPVYSASKAAALSFTNSLARLAPITGVTAYSINPGITRTPLVHKFNSWLDVEPRVGELLLEHPTQTTLECAQNFVKAIEANKNGAIWQLDLGQLIAVEWTKHWDSHI.

Residue 10–33 participates in NAD(+) binding; it reads FVAGLGGIGLDTSREIVKSGPKNL. Position 138 (Ser-138) interacts with substrate. Tyr-151 (proton acceptor) is an active-site residue.

The protein belongs to the short-chain dehydrogenases/reductases (SDR) family. Homodimer.

It carries out the reaction a primary alcohol + NAD(+) = an aldehyde + NADH + H(+). The catalysed reaction is a secondary alcohol + NAD(+) = a ketone + NADH + H(+). The chain is Alcohol dehydrogenase 2 (Adh2) from Drosophila montana (Fruit fly).